The chain runs to 643 residues: Threonine--tRNA ligase (643 aa).

Residues 1–61 (MIKITLKDGS…NEDSSLEICT (61 aa)) form the TGS domain. Residues 240–540 (DHNKLGRELG…LIEKYAGALP (301 aa)) form a catalytic region. Zn(2+)-binding residues include C335, H386, and H517.

This sequence belongs to the class-II aminoacyl-tRNA synthetase family. Homodimer. The cofactor is Zn(2+).

The protein localises to the cytoplasm. It carries out the reaction tRNA(Thr) + L-threonine + ATP = L-threonyl-tRNA(Thr) + AMP + diphosphate + H(+). Catalyzes the attachment of threonine to tRNA(Thr) in a two-step reaction: L-threonine is first activated by ATP to form Thr-AMP and then transferred to the acceptor end of tRNA(Thr). Also edits incorrectly charged L-seryl-tRNA(Thr). In Clostridium perfringens (strain SM101 / Type A), this protein is Threonine--tRNA ligase.